The primary structure comprises 1230 residues: Cullin-associated NEDD8-dissociated protein 1 (1230 aa).

The residue at position 2 (Ala2) is an N-acetylalanine. 12 HEAT repeats span residues 2–39, 44–81, 83–119, 131–165, 171–208, 210–247, 248–282, 289–366, 370–407, 424–467, 471–510, and 515–552; these read ASAS…KDSI, DSER…KVKE, QVET…ELPP, CKKI…LSRQ, NFHP…SCGN, VFVD…QAGH, RIGE…FESF, EVYP…TRHE, EFYK…QTRP, PLTM…VLPG, QHIP…NHSP, and PHVQ…VIRP. Position 55 is an N6-acetyllysine (Lys55). Residues 315–344 form a disordered region; that stretch reads DEDEDENAMDADGGDDDDQGSDDEYSDDDD. Ser335 is subject to Phosphoserine. Residue Ser558 is modified to Phosphoserine. 15 HEAT repeats span residues 563-602, 606-643, 646-683, 688-725, 729-768, 770-808, 809-845, 852-889, 890-927, 928-960, 961-998, 1002-1039, 1043-1097, 1099-1133, and 1140-1189; these read PYIK…NLGD, SDLP…LKID, PVLG…NYSD, AMID…VYPS, KISG…TGTN, LGYM…ALTR, ACPK…LGEV, SGQL…GNLP, EYLP…GLKP, YVEN…KLTL, IDPE…DHPQ, PLLK…NKPS, DLLD…DSCL, RLDI…LSTL, and QRLD…IPEA. An N6-acetyllysine modification is found at Lys971.

Belongs to the CAND family. In terms of assembly, interacts with TBP. Part of a complex that contains CUL1 and RBX1. Interacts with unneddylated cullins: interacts with CUL1, CUL2, CUL3, CUL4A, CUL4B and CUL5. Does not bind neddylated CUL1. Interaction with cullins is abolished in presence of COMMD1, which antagonizes with CAND1 for interacting with cullins. Interacts with ERCC6. Interacts with DCUN1D1, DCUN1D2, DCUN1D3, DCUN1D4 and DCUN1D5; these interactions are bridged by cullins and strongly inhibits the neddylation of cullins.

The protein localises to the cytoplasm. It localises to the nucleus. Its function is as follows. Key assembly factor of SCF (SKP1-CUL1-F-box protein) E3 ubiquitin ligase complexes that promotes the exchange of the substrate-recognition F-box subunit in SCF complexes, thereby playing a key role in the cellular repertoire of SCF complexes. Acts as a F-box protein exchange factor. The exchange activity of CAND1 is coupled with cycles of neddylation conjugation: in the deneddylated state, cullin-binding CAND1 binds CUL1-RBX1, increasing dissociation of the SCF complex and promoting exchange of the F-box protein. Probably plays a similar role in other cullin-RING E3 ubiquitin ligase complexes. This is Cullin-associated NEDD8-dissociated protein 1 (CAND1) from Bos taurus (Bovine).